The primary structure comprises 433 residues: Pseudopaline synthase (433 aa).

A helical membrane pass occupies residues serine 7–leucine 27. NAD(+) contacts are provided by residues leucine 16–valine 19, asparagine 39–histidine 40, and threonine 154. The Proton donor/acceptor role is filled by histidine 219. Glutamate 364 serves as a coordination point for NAD(+).

It belongs to the staphylopine dehydrogenase family. In terms of assembly, homodimer. Interacts with CntL.

It localises to the cell membrane. The enzyme catalyses pseudopaline + NAD(+) + H2O = (2S)-2-amino-4-{[(1S)-1-carboxy-2-(1H-imidazol-4-yl)ethyl]amino}butanoate + 2-oxoglutarate + NADH + H(+). In terms of biological role, catalyzes the NADH-dependent reductive condensation of alpha-ketoglutarate to the intermediate formed by the adjacently encoded enzyme CntL, namely (2S)-2-amino-4-{[(1S)-1-carboxy-2-(1H-imidazol-4-yl)ethyl]amino}butanoate, leading to the production of pseudopaline. This is the last step in the biosynthesis of the metallophore pseudopaline, which is involved in the acquisition of nickel and zinc, and thus enables bacterial growth inside the host, where metal access is limited. Therefore, this enzyme probably contributes to Pseudomonas virulence. Can use neither pyruvate nor NADPH in place of alpha-ketoglutarate and NADH, respectively. The chain is Pseudopaline synthase from Pseudomonas aeruginosa (strain UCBPP-PA14).